The primary structure comprises 663 residues: 4-hydroxy-3-methylbut-2-en-1-yl diphosphate synthase (flavodoxin) (663 aa).

[4Fe-4S] cluster is bound by residues C568, C571, C602, and E609.

Belongs to the IspG family. Requires [4Fe-4S] cluster as cofactor.

The enzyme catalyses (2E)-4-hydroxy-3-methylbut-2-enyl diphosphate + oxidized [flavodoxin] + H2O + 2 H(+) = 2-C-methyl-D-erythritol 2,4-cyclic diphosphate + reduced [flavodoxin]. The protein operates within isoprenoid biosynthesis; isopentenyl diphosphate biosynthesis via DXP pathway; isopentenyl diphosphate from 1-deoxy-D-xylulose 5-phosphate: step 5/6. Converts 2C-methyl-D-erythritol 2,4-cyclodiphosphate (ME-2,4cPP) into 1-hydroxy-2-methyl-2-(E)-butenyl 4-diphosphate. This chain is 4-hydroxy-3-methylbut-2-en-1-yl diphosphate synthase (flavodoxin), found in Leptospira borgpetersenii serovar Hardjo-bovis (strain L550).